The following is a 172-amino-acid chain: NADH-quinone oxidoreductase subunit B (172 aa).

4 residues coordinate [4Fe-4S] cluster: Cys-46, Cys-47, Cys-111, and Cys-141.

It belongs to the complex I 20 kDa subunit family. As to quaternary structure, NDH-1 is composed of 14 different subunits. Subunits NuoB, C, D, E, F, and G constitute the peripheral sector of the complex. [4Fe-4S] cluster serves as cofactor.

It localises to the cell membrane. It carries out the reaction a quinone + NADH + 5 H(+)(in) = a quinol + NAD(+) + 4 H(+)(out). Functionally, NDH-1 shuttles electrons from NADH, via FMN and iron-sulfur (Fe-S) centers, to quinones in the respiratory chain. The immediate electron acceptor for the enzyme in this species is believed to be a menaquinone. Couples the redox reaction to proton translocation (for every two electrons transferred, four hydrogen ions are translocated across the cytoplasmic membrane), and thus conserves the redox energy in a proton gradient. The sequence is that of NADH-quinone oxidoreductase subunit B from Bacillus cereus (strain G9842).